Here is a 278-residue protein sequence, read N- to C-terminus: N-terminal Xaa-Pro-Lys N-methyltransferase 2 (278 aa).

Residues glycine 123, arginine 128, aspartate 145, 174–175 (LQ), glutamine 190, and histidine 195 each bind S-adenosyl-L-methionine.

This sequence belongs to the methyltransferase superfamily. NTM1 family.

The protein resides in the nucleus. It carries out the reaction N-terminal L-alanyl-L-prolyl-L-lysyl-[protein] + S-adenosyl-L-methionine = N-terminal N-methyl-L-alanyl-L-prolyl-L-lysyl-[protein] + S-adenosyl-L-homocysteine + H(+). The enzyme catalyses N-terminal L-prolyl-L-prolyl-L-lysyl-[protein] + S-adenosyl-L-methionine = N-terminal N-methyl-L-prolyl-L-prolyl-L-lysyl-[protein] + S-adenosyl-L-homocysteine + H(+). The catalysed reaction is N-terminal L-seryl-L-prolyl-L-lysyl-[protein] + S-adenosyl-L-methionine = N-terminal N-methyl-L-seryl-L-prolyl-L-lysyl-[protein] + S-adenosyl-L-homocysteine + H(+). Functionally, alpha N-methyltransferase that methylates the N-terminus of target proteins containing the N-terminal motif [Ala/Pro/Ser]-Pro-Lys when the initiator Met is cleaved. Specifically catalyzes monomethylation of exposed alpha-amino group of Ala or Ser residue in the [Ala/Ser]-Pro-Lys motif and Pro in the Pro-Pro-Lys motif. Predominantly functions as a mono-methyltransferase but is also able to di-/tri-methylate the GPKRIA peptide and di-methylate the PPKRIA peptide (in vitro). May activate NTMT1 by priming its substrates for trimethylation. The chain is N-terminal Xaa-Pro-Lys N-methyltransferase 2 (ntmt2) from Danio rerio (Zebrafish).